Here is a 239-residue protein sequence, read N- to C-terminus: Sugar fermentation stimulation protein homolog (239 aa).

This sequence belongs to the SfsA family.

The polypeptide is Sugar fermentation stimulation protein homolog (Alcanivorax borkumensis (strain ATCC 700651 / DSM 11573 / NCIMB 13689 / SK2)).